The chain runs to 317 residues: ADP-L-glycero-D-manno-heptose-6-epimerase (317 aa).

NADP(+)-binding positions include 10–11, 31–32, lysine 38, lysine 53, 75–79, and asparagine 92; these read FI, DD, and QGACS. Tyrosine 139 (proton acceptor) is an active-site residue. Lysine 143 contacts NADP(+). Residue asparagine 166 coordinates substrate. Residues valine 167 and lysine 175 each contribute to the NADP(+) site. Residue lysine 175 is the Proton acceptor of the active site. Residues glycine 177, histidine 184, 198 to 201, arginine 211, and tyrosine 275 contribute to the substrate site; that span reads FEGV.

The protein belongs to the NAD(P)-dependent epimerase/dehydratase family. HldD subfamily. Homopentamer. It depends on NADP(+) as a cofactor.

The catalysed reaction is ADP-D-glycero-beta-D-manno-heptose = ADP-L-glycero-beta-D-manno-heptose. Its pathway is nucleotide-sugar biosynthesis; ADP-L-glycero-beta-D-manno-heptose biosynthesis; ADP-L-glycero-beta-D-manno-heptose from D-glycero-beta-D-manno-heptose 7-phosphate: step 4/4. Its function is as follows. Catalyzes the interconversion between ADP-D-glycero-beta-D-manno-heptose and ADP-L-glycero-beta-D-manno-heptose via an epimerization at carbon 6 of the heptose. In Shewanella piezotolerans (strain WP3 / JCM 13877), this protein is ADP-L-glycero-D-manno-heptose-6-epimerase.